The chain runs to 316 residues: Probable porphobilinogen deaminase (316 aa).

At cysteine 234 the chain carries S-(dipyrrolylmethanemethyl)cysteine.

This sequence belongs to the HMBS family. Dipyrromethane serves as cofactor.

It carries out the reaction 4 porphobilinogen + H2O = hydroxymethylbilane + 4 NH4(+). It functions in the pathway porphyrin-containing compound metabolism; protoporphyrin-IX biosynthesis; coproporphyrinogen-III from 5-aminolevulinate: step 2/4. In terms of biological role, tetrapolymerization of the monopyrrole PBG into the hydroxymethylbilane pre-uroporphyrinogen in several discrete steps. This chain is Probable porphobilinogen deaminase, found in Methanosarcina mazei (strain ATCC BAA-159 / DSM 3647 / Goe1 / Go1 / JCM 11833 / OCM 88) (Methanosarcina frisia).